A 67-amino-acid polypeptide reads, in one-letter code: DNA-directed RNA polymerase subunit omega (67 aa).

It belongs to the RNA polymerase subunit omega family. In terms of assembly, the RNAP catalytic core consists of 2 alpha, 1 beta, 1 beta' and 1 omega subunit. When a sigma factor is associated with the core the holoenzyme is formed, which can initiate transcription.

It carries out the reaction RNA(n) + a ribonucleoside 5'-triphosphate = RNA(n+1) + diphosphate. In terms of biological role, promotes RNA polymerase assembly. Latches the N- and C-terminal regions of the beta' subunit thereby facilitating its interaction with the beta and alpha subunits. This chain is DNA-directed RNA polymerase subunit omega, found in Acidovorax ebreus (strain TPSY) (Diaphorobacter sp. (strain TPSY)).